Here is a 721-residue protein sequence, read N- to C-terminus: Catalase-peroxidase (721 aa).

The segment at residues 95–223 is a cross-link (tryptophyl-tyrosyl-methioninium (Trp-Tyr) (with M-249)); it reads WHSAGSYRLF…LGAVHMGLIY (129 aa). H96 functions as the Proton acceptor in the catalytic mechanism. The segment at residues 223 to 249 is a cross-link (tryptophyl-tyrosyl-methioninium (Tyr-Met) (with W-95)); it reads YVNPQGRDGKPDPLKSAHDVRVTFKRM. H264 is a heme b binding site.

Belongs to the peroxidase family. Peroxidase/catalase subfamily. Homodimer or homotetramer. It depends on heme b as a cofactor. Formation of the three residue Trp-Tyr-Met cross-link is important for the catalase, but not the peroxidase activity of the enzyme.

The catalysed reaction is H2O2 + AH2 = A + 2 H2O. The enzyme catalyses 2 H2O2 = O2 + 2 H2O. Its function is as follows. Bifunctional enzyme with both catalase and broad-spectrum peroxidase activity. In Parvibaculum lavamentivorans (strain DS-1 / DSM 13023 / NCIMB 13966), this protein is Catalase-peroxidase.